An 85-amino-acid chain; its full sequence is U4-theraphotoxin-Hhn1a (85 aa).

Residues 1-22 form the signal peptide; sequence MKVTLIAILTCAAVLVLHTTAA. A propeptide spanning residues 23–48 is cleaved from the precursor; that stretch reads EELEAEGQLMEVGMPDTELAAVDEER. Intrachain disulfides connect Cys52–Cys66, Cys56–Cys77, and Cys71–Cys82.

Belongs to the neurotoxin 12 (Hwtx-2) family. 02 (Hwtx-2) subfamily. Monomer. Expressed by the venom gland.

It localises to the secreted. In terms of biological role, neurotoxin active on both insects and mammals. This chain is U4-theraphotoxin-Hhn1a, found in Cyriopagopus hainanus (Chinese bird spider).